The chain runs to 497 residues: Phenylalanine--tRNA ligase alpha subunit (497 aa).

L-phenylalanine is bound by residues Thr329, Gln372–Glu374, and Tyr412. Glu414 contacts Mg(2+). Phe438 is a binding site for L-phenylalanine.

This sequence belongs to the class-II aminoacyl-tRNA synthetase family. Phe-tRNA synthetase alpha subunit type 2 subfamily. Heterotetramer; dimer of two heterodimers formed by alpha and beta subunits. Mg(2+) is required as a cofactor.

Its subcellular location is the cytoplasm. It carries out the reaction tRNA(Phe) + L-phenylalanine + ATP = L-phenylalanyl-tRNA(Phe) + AMP + diphosphate + H(+). This is Phenylalanine--tRNA ligase alpha subunit (farsa) from Danio rerio (Zebrafish).